The chain runs to 85 residues: Elongation factor 1-beta (85 aa).

It belongs to the EF-1-beta/EF-1-delta family.

Its function is as follows. Promotes the exchange of GDP for GTP in EF-1-alpha/GDP, thus allowing the regeneration of EF-1-alpha/GTP that could then be used to form the ternary complex EF-1-alpha/GTP/AAtRNA. The protein is Elongation factor 1-beta of Methanosphaerula palustris (strain ATCC BAA-1556 / DSM 19958 / E1-9c).